A 280-amino-acid chain; its full sequence is Urease accessory protein UreD 1 (280 aa).

It belongs to the UreD family. As to quaternary structure, ureD, UreF and UreG form a complex that acts as a GTP-hydrolysis-dependent molecular chaperone, activating the urease apoprotein by helping to assemble the nickel containing metallocenter of UreC. The UreE protein probably delivers the nickel.

Its subcellular location is the cytoplasm. Required for maturation of urease via the functional incorporation of the urease nickel metallocenter. This chain is Urease accessory protein UreD 1, found in Brucella melitensis biotype 1 (strain ATCC 23456 / CCUG 17765 / NCTC 10094 / 16M).